Here is a 112-residue protein sequence, read N- to C-terminus: Large ribosomal subunit protein P2 (112 aa).

A compositionally biased stretch (low complexity) spans 69–85; that stretch reads AGGAAMPAAAAGGAPAA. The interval 69-112 is disordered; sequence AGGAAMPAAAAGGAPAAAEDKAEAKKPEAEPEEEEDDMGFSLFD. Residues 86–97 show a composition bias toward basic and acidic residues; the sequence is AEDKAEAKKPEA.

This sequence belongs to the eukaryotic ribosomal protein P1/P2 family. P1 and P2 exist as dimers at the large ribosomal subunit. Phosphorylated.

In terms of biological role, plays an important role in the elongation step of protein synthesis. The protein is Large ribosomal subunit protein P2 of Babesia bovis.